A 308-amino-acid polypeptide reads, in one-letter code: UDP-N-acetylenolpyruvoylglucosamine reductase (308 aa).

The FAD-binding PCMH-type domain occupies V32 to G196. The active site involves R176. The Proton donor role is filled by S225. The active site involves E296.

Belongs to the MurB family. FAD is required as a cofactor.

It is found in the cytoplasm. The catalysed reaction is UDP-N-acetyl-alpha-D-muramate + NADP(+) = UDP-N-acetyl-3-O-(1-carboxyvinyl)-alpha-D-glucosamine + NADPH + H(+). Its pathway is cell wall biogenesis; peptidoglycan biosynthesis. Its function is as follows. Cell wall formation. This is UDP-N-acetylenolpyruvoylglucosamine reductase from Legionella pneumophila (strain Lens).